The following is a 653-amino-acid chain: Ran-binding protein 9 (653 aa).

Residues 1–21 (MSGQPPPPPPQQQPPPPPPPA) show a composition bias toward pro residues. The segment at 1–62 (MSGQPPPPPP…SAAAPFPHGD (62 aa)) is disordered. The segment covering 22-57 (SAAAPATAPPGLAVGPGPAAGVPVPGLAAGSSAAAP) has biased composition (low complexity). The B30.2/SPRY domain maps to 72 to 259 (LQRRLKRLYP…VDANFGQHPF (188 aa)). Positions 290-322 (WQTMIQKMVSSYLVHHGYCATAEAFARSTDQTV) constitute a LisH domain. An interaction with CALB1 region spans residues 326–332 (LASIKNR). The 58-residue stretch at 328-385 (SIKNRQRIQKLVLAGRMGEAIETTQQLYPSLLERNPNLLFTLKVRQFIEMVNGTDSEV) folds into the CTLH domain. An N6-acetyllysine modification is found at Lys-330. The segment at 386–422 (RCLGGRSPKSQDSYPVSPRPFSSPSMSPSHGMSIHSL) is disordered. The span at 398 to 421 (SYPVSPRPFSSPSMSPSHGMSIHS) shows a compositional bias: low complexity. Phosphoserine occurs at positions 402 and 412. Positions 539 to 653 (AAIERMIHFG…AFATVEDYLH (115 aa)) are interaction with FMR1.

It belongs to the RANBP9/10 family. Part of a complex consisting of RANBP9, MKLN1 and GID8. Identified in the CTLH complex that contains GID4, RANBP9 and/or RANBP10, MKLN1, MAEA, RMND5A (or alternatively its paralog RMND5B), GID8, ARMC8, WDR26 and YPEL5. Within this complex, MAEA, RMND5A (or alternatively its paralog RMND5B), GID8, WDR26, and RANBP9 and/or RANBP10 form the catalytic core, while GID4, MKLN1, ARMC8 and YPEL5 have ancillary roles. Interacts with GTP-bound Ran, AR, CDC2L1/p110C, CALB1, S100A7, USP11, SOS1 or SOS2, GID8, and FMR1. Interacts with the Dyrk kinases HIPK2, DYRK1A, and DYRK1B. Interacts with TP73 isoform Alpha but not with TP53. Interacts with the HGF receptor MET and the integrins ITGB1 and ITGB2, but not with ITGAL. Part of a complex consisting of RANBP9, RAN, DYRK1B and COPS5. Directly interacts with RANBP10. Interacts with YPEL5. Interacts with MKLN1. Interacts with DDX4. Interacts with NGFR. Interacts with Tex19.1 and, probably, Tex19.2. Phosphorylated in response to stress. In terms of processing, ubiquitinated. Polyubiquitination targets the protein for rapid degradation via the ubiquitin system. In terms of tissue distribution, ubiquitously expressed, with highest levels in maturating spermatocytes.

The protein resides in the cytoplasm. It localises to the cell membrane. It is found in the nucleus. Its function is as follows. May act as scaffolding protein, and as adapter protein to couple membrane receptors to intracellular signaling pathways. Acts as a mediator of cell spreading and actin cytoskeleton rearrangement. Core component of the CTLH E3 ubiquitin-protein ligase complex that selectively accepts ubiquitin from UBE2H and mediates ubiquitination and subsequent proteasomal degradation of the transcription factor HBP1. May be involved in signaling of ITGB2/LFA-1 and other integrins. Enhances HGF-MET signaling by recruiting Sos and activating the Ras pathway. Enhances dihydrotestosterone-induced transactivation activity of AR, as well as dexamethasone-induced transactivation activity of NR3C1, but not affect estrogen-induced transactivation. Stabilizes TP73 isoform Alpha, probably by inhibiting its ubiquitination, and increases its proapoptotic activity. Inhibits the kinase activity of DYRK1A and DYRK1B. Inhibits FMR1 binding to RNA. In Mus musculus (Mouse), this protein is Ran-binding protein 9.